We begin with the raw amino-acid sequence, 37 residues long: Large ribosomal subunit protein bL36 (37 aa).

It belongs to the bacterial ribosomal protein bL36 family.

The protein is Large ribosomal subunit protein bL36 of Aliivibrio fischeri (strain ATCC 700601 / ES114) (Vibrio fischeri).